Reading from the N-terminus, the 352-residue chain is UPF0324 membrane protein RA0957 (352 aa).

The next 10 helical transmembrane spans lie at 24–43, 48–67, 104–126, 136–158, 169–191, 201–223, 235–257, 272–294, 301–318, and 328–350; these read VVSY…SAQF, YGAP…NFLS, LGVS…AIIV, LSLL…LNAV, LALT…PVLA, SGVF…FAMS, IVRV…VLGA, GFVL…AAAG, SRWL…KTSV, and HVTL…LLWY.

The protein belongs to the UPF0324 family.

Its subcellular location is the cell membrane. The chain is UPF0324 membrane protein RA0957 from Rhizobium meliloti (strain 1021) (Ensifer meliloti).